We begin with the raw amino-acid sequence, 31 residues long: Diuretic hormone class 2 (31 aa).

A Proline amide modification is found at P31.

This sequence belongs to the diuretic hormone class 2 family.

Its subcellular location is the secreted. In terms of biological role, regulation of fluid secretion. Stimulates primary urine secretion by Malpighian tubules and causes a dose-dependent stimulation of cAMP levels in the tubules. Has a nonselective effect on Na(+)/K(+) ion transport. In vitro, primarily elevates intracellular Ca(2+). This is Diuretic hormone class 2 from Apis mellifera (Honeybee).